A 227-amino-acid chain; its full sequence is Cytochrome c oxidase subunit 2 (227 aa).

Over 1–14 the chain is Mitochondrial intermembrane; sequence MAYPFQLGLQDATS. A helical membrane pass occupies residues 15–45; the sequence is PIMEELTNFHDHTLMIVFLISSLVLYIISLM. The Mitochondrial matrix segment spans residues 46–59; that stretch reads LTTKLTHTSTMDAQ. The helical transmembrane segment at 60-87 threads the bilayer; it reads EVETIWTILPAAILVLIALPSLRILYMM. The Mitochondrial intermembrane segment spans residues 88 to 227; that stretch reads DEINNPVLTV…HFENWSASMV (140 aa). Cu cation is bound by residues histidine 161, cysteine 196, glutamate 198, cysteine 200, histidine 204, and methionine 207. Glutamate 198 is a Mg(2+) binding site.

The protein belongs to the cytochrome c oxidase subunit 2 family. In terms of assembly, component of the cytochrome c oxidase (complex IV, CIV), a multisubunit enzyme composed of 14 subunits. The complex is composed of a catalytic core of 3 subunits MT-CO1, MT-CO2 and MT-CO3, encoded in the mitochondrial DNA, and 11 supernumerary subunits COX4I, COX5A, COX5B, COX6A, COX6B, COX6C, COX7A, COX7B, COX7C, COX8 and NDUFA4, which are encoded in the nuclear genome. The complex exists as a monomer or a dimer and forms supercomplexes (SCs) in the inner mitochondrial membrane with NADH-ubiquinone oxidoreductase (complex I, CI) and ubiquinol-cytochrome c oxidoreductase (cytochrome b-c1 complex, complex III, CIII), resulting in different assemblies (supercomplex SCI(1)III(2)IV(1) and megacomplex MCI(2)III(2)IV(2)). Found in a complex with TMEM177, COA6, COX18, COX20, SCO1 and SCO2. Interacts with TMEM177 in a COX20-dependent manner. Interacts with COX20. Interacts with COX16. It depends on Cu cation as a cofactor.

The protein resides in the mitochondrion inner membrane. It catalyses the reaction 4 Fe(II)-[cytochrome c] + O2 + 8 H(+)(in) = 4 Fe(III)-[cytochrome c] + 2 H2O + 4 H(+)(out). Functionally, component of the cytochrome c oxidase, the last enzyme in the mitochondrial electron transport chain which drives oxidative phosphorylation. The respiratory chain contains 3 multisubunit complexes succinate dehydrogenase (complex II, CII), ubiquinol-cytochrome c oxidoreductase (cytochrome b-c1 complex, complex III, CIII) and cytochrome c oxidase (complex IV, CIV), that cooperate to transfer electrons derived from NADH and succinate to molecular oxygen, creating an electrochemical gradient over the inner membrane that drives transmembrane transport and the ATP synthase. Cytochrome c oxidase is the component of the respiratory chain that catalyzes the reduction of oxygen to water. Electrons originating from reduced cytochrome c in the intermembrane space (IMS) are transferred via the dinuclear copper A center (CU(A)) of subunit 2 and heme A of subunit 1 to the active site in subunit 1, a binuclear center (BNC) formed by heme A3 and copper B (CU(B)). The BNC reduces molecular oxygen to 2 water molecules using 4 electrons from cytochrome c in the IMS and 4 protons from the mitochondrial matrix. This chain is Cytochrome c oxidase subunit 2 (MT-CO2), found in Uromys caudimaculatus (Giant white-tailed rat).